Here is a 486-residue protein sequence, read N- to C-terminus: NADH-quinone oxidoreductase subunit N (486 aa).

13 consecutive transmembrane segments (helical) span residues 5 to 25 (IGLS…ASLL), 41 to 61 (LITL…LVVF), 77 to 97 (GVTQ…MVMM), 118 to 138 (SAVG…FIGL), 165 to 185 (YFIL…FIFG), 209 to 229 (FLFG…IAPF), 245 to 265 (TAFM…RIIA), 275 to 295 (LFDI…AAAI), 304 to 324 (IAYS…TAGV), 335 to 355 (VIFY…IAAM), 380 to 400 (ALCL…LGFF), 413 to 433 (GLLW…YYYL), and 458 to 478 (VTAV…GPIF).

This sequence belongs to the complex I subunit 2 family. In terms of assembly, NDH-1 is composed of 14 different subunits. Subunits NuoA, H, J, K, L, M, N constitute the membrane sector of the complex.

Its subcellular location is the cell inner membrane. The enzyme catalyses a quinone + NADH + 5 H(+)(in) = a quinol + NAD(+) + 4 H(+)(out). Functionally, NDH-1 shuttles electrons from NADH, via FMN and iron-sulfur (Fe-S) centers, to quinones in the respiratory chain. The immediate electron acceptor for the enzyme in this species is believed to be ubiquinone. Couples the redox reaction to proton translocation (for every two electrons transferred, four hydrogen ions are translocated across the cytoplasmic membrane), and thus conserves the redox energy in a proton gradient. The protein is NADH-quinone oxidoreductase subunit N of Bdellovibrio bacteriovorus (strain ATCC 15356 / DSM 50701 / NCIMB 9529 / HD100).